Consider the following 496-residue polypeptide: 3-octaprenyl-4-hydroxybenzoate carboxy-lyase (496 aa).

Asn181 contacts Mn(2+). Residues 184–186, 198–200, and 203–204 each bind prenylated FMN; these read IYR, RWL, and RG. Glu247 provides a ligand contact to Mn(2+). The Proton donor role is filled by Asp296.

It belongs to the UbiD family. In terms of assembly, homohexamer. Prenylated FMN is required as a cofactor. The cofactor is Mn(2+).

The protein resides in the cell membrane. It carries out the reaction a 4-hydroxy-3-(all-trans-polyprenyl)benzoate + H(+) = a 2-(all-trans-polyprenyl)phenol + CO2. Its pathway is cofactor biosynthesis; ubiquinone biosynthesis. Catalyzes the decarboxylation of 3-octaprenyl-4-hydroxy benzoate to 2-octaprenylphenol, an intermediate step in ubiquinone biosynthesis. The polypeptide is 3-octaprenyl-4-hydroxybenzoate carboxy-lyase (Azoarcus sp. (strain BH72)).